The primary structure comprises 173 residues: Crossover junction endodeoxyribonuclease RuvC (173 aa).

Catalysis depends on residues aspartate 8, glutamate 67, and aspartate 139. Residues aspartate 8, glutamate 67, and aspartate 139 each coordinate Mg(2+).

It belongs to the RuvC family. In terms of assembly, homodimer which binds Holliday junction (HJ) DNA. The HJ becomes 2-fold symmetrical on binding to RuvC with unstacked arms; it has a different conformation from HJ DNA in complex with RuvA. In the full resolvosome a probable DNA-RuvA(4)-RuvB(12)-RuvC(2) complex forms which resolves the HJ. The cofactor is Mg(2+).

The protein resides in the cytoplasm. The catalysed reaction is Endonucleolytic cleavage at a junction such as a reciprocal single-stranded crossover between two homologous DNA duplexes (Holliday junction).. In terms of biological role, the RuvA-RuvB-RuvC complex processes Holliday junction (HJ) DNA during genetic recombination and DNA repair. Endonuclease that resolves HJ intermediates. Cleaves cruciform DNA by making single-stranded nicks across the HJ at symmetrical positions within the homologous arms, yielding a 5'-phosphate and a 3'-hydroxyl group; requires a central core of homology in the junction. The consensus cleavage sequence is 5'-(A/T)TT(C/G)-3'. Cleavage occurs on the 3'-side of the TT dinucleotide at the point of strand exchange. HJ branch migration catalyzed by RuvA-RuvB allows RuvC to scan DNA until it finds its consensus sequence, where it cleaves and resolves the cruciform DNA. The sequence is that of Crossover junction endodeoxyribonuclease RuvC from Baumannia cicadellinicola subsp. Homalodisca coagulata.